Reading from the N-terminus, the 1262-residue chain is DNA-directed RNA polymerase subunit beta' (1262 aa).

Positions 220, 294, 301, and 304 each coordinate Zn(2+).

Belongs to the RNA polymerase beta' chain family. RpoC2 subfamily. In terms of assembly, in cyanobacteria the RNAP catalytic core is composed of 2 alpha, 1 beta, 1 beta', 1 gamma and 1 omega subunit. When a sigma factor is associated with the core the holoenzyme is formed, which can initiate transcription. It depends on Zn(2+) as a cofactor.

The catalysed reaction is RNA(n) + a ribonucleoside 5'-triphosphate = RNA(n+1) + diphosphate. DNA-dependent RNA polymerase catalyzes the transcription of DNA into RNA using the four ribonucleoside triphosphates as substrates. The polypeptide is DNA-directed RNA polymerase subunit beta' (Gloeobacter violaceus (strain ATCC 29082 / PCC 7421)).